The sequence spans 282 residues: Putative SWIB domain-containing protein 070L (282 aa).

Low complexity predominate over residues 1–16; the sequence is MFQTTPKQVKPTTVPK. Positions 1–21 are disordered; that stretch reads MFQTTPKQVKPTTVPKTGRKN. Residues 97-181 enclose the SWIB/MDM2 domain; sequence GLEKPRMISE…QKYLKHCFDE (85 aa). The interval 199 to 282 is disordered; it reads TDDQTTAEEA…KVKKEHKIKK (84 aa). Over residues 262 to 275 the composition is skewed to basic and acidic residues; sequence GKKDKENIPLEKVK.

The protein belongs to the IIV-6 306R family.

The chain is Putative SWIB domain-containing protein 070L from Invertebrate iridescent virus 3 (IIV-3).